The sequence spans 409 residues: Phosphatidylserine decarboxylase proenzyme, mitochondrial (409 aa).

The transit peptide at 1 to 52 directs the protein to the mitochondrion; sequence MATSVGHRCLGLLHGVAPWRSSLHPCEITALSQSLQPLRKLPFRAFRTDARK. The Mitochondrial matrix portion of the chain corresponds to 53–63; that stretch reads IHTAPARTMFL. A helical membrane pass occupies residues 64-82; the sequence is LRPVPILLATGGGYAGYRQ. Residues 83–409 are Mitochondrial intermembrane-facing; sequence YEKYRERELE…IRFGEALGSL (327 aa). Active-site charge relay system; for autoendoproteolytic cleavage activity residues include aspartate 191, histidine 267, and serine 378. The active-site Schiff-base intermediate with substrate; via pyruvic acid; for decarboxylase activity is serine 378. Serine 378 carries the pyruvic acid (Ser); by autocatalysis modification.

It belongs to the phosphatidylserine decarboxylase family. PSD-B subfamily. Eukaryotic type I sub-subfamily. In terms of assembly, heterodimer of a large membrane-associated beta subunit and a small pyruvoyl-containing alpha subunit. Pyruvate is required as a cofactor. Post-translationally, is synthesized initially as an inactive proenzyme. Formation of the active enzyme involves a self-maturation process in which the active site pyruvoyl group is generated from an internal serine residue via an autocatalytic post-translational modification. Two non-identical subunits are generated from the proenzyme in this reaction, and the pyruvate is formed at the N-terminus of the alpha chain, which is derived from the carboxyl end of the proenzyme. The autoendoproteolytic cleavage occurs by a canonical serine protease mechanism, in which the side chain hydroxyl group of the serine supplies its oxygen atom to form the C-terminus of the beta chain, while the remainder of the serine residue undergoes an oxidative deamination to produce ammonia and the pyruvoyl prosthetic group on the alpha chain. During this reaction, the Ser that is part of the protease active site of the proenzyme becomes the pyruvoyl prosthetic group, which constitutes an essential element of the active site of the mature decarboxylase.

It localises to the mitochondrion inner membrane. It is found in the lipid droplet. Its subcellular location is the cytoplasm. The catalysed reaction is a 1,2-diacyl-sn-glycero-3-phospho-L-serine + H(+) = a 1,2-diacyl-sn-glycero-3-phosphoethanolamine + CO2. It participates in phospholipid metabolism; phosphatidylethanolamine biosynthesis. In terms of biological role, catalyzes the formation of phosphatidylethanolamine (PtdEtn) from phosphatidylserine (PtdSer). Plays a central role in phospholipid metabolism and in the interorganelle trafficking of phosphatidylserine. May be involved in lipid droplet biogenesis at the endoplasmic reticulum membrane. This Pongo abelii (Sumatran orangutan) protein is Phosphatidylserine decarboxylase proenzyme, mitochondrial.